Consider the following 217-residue polypeptide: Probable nicotinate-nucleotide adenylyltransferase (217 aa).

Belongs to the NadD family.

It carries out the reaction nicotinate beta-D-ribonucleotide + ATP + H(+) = deamido-NAD(+) + diphosphate. It functions in the pathway cofactor biosynthesis; NAD(+) biosynthesis; deamido-NAD(+) from nicotinate D-ribonucleotide: step 1/1. Functionally, catalyzes the reversible adenylation of nicotinate mononucleotide (NaMN) to nicotinic acid adenine dinucleotide (NaAD). The sequence is that of Probable nicotinate-nucleotide adenylyltransferase from Moorella thermoacetica (strain ATCC 39073 / JCM 9320).